A 93-amino-acid polypeptide reads, in one-letter code: Pyrimidine/purine nucleoside phosphorylase (93 aa).

This sequence belongs to the nucleoside phosphorylase PpnP family.

It carries out the reaction a purine D-ribonucleoside + phosphate = a purine nucleobase + alpha-D-ribose 1-phosphate. It catalyses the reaction adenosine + phosphate = alpha-D-ribose 1-phosphate + adenine. The catalysed reaction is cytidine + phosphate = cytosine + alpha-D-ribose 1-phosphate. The enzyme catalyses guanosine + phosphate = alpha-D-ribose 1-phosphate + guanine. It carries out the reaction inosine + phosphate = alpha-D-ribose 1-phosphate + hypoxanthine. It catalyses the reaction thymidine + phosphate = 2-deoxy-alpha-D-ribose 1-phosphate + thymine. The catalysed reaction is uridine + phosphate = alpha-D-ribose 1-phosphate + uracil. The enzyme catalyses xanthosine + phosphate = alpha-D-ribose 1-phosphate + xanthine. Functionally, catalyzes the phosphorolysis of diverse nucleosides, yielding D-ribose 1-phosphate and the respective free bases. Can use uridine, adenosine, guanosine, cytidine, thymidine, inosine and xanthosine as substrates. Also catalyzes the reverse reactions. The sequence is that of Pyrimidine/purine nucleoside phosphorylase from Marinobacter nauticus (strain ATCC 700491 / DSM 11845 / VT8) (Marinobacter aquaeolei).